A 486-amino-acid polypeptide reads, in one-letter code: Cobyric acid synthase (486 aa).

Residues 248–435 (VLNVVVPVLP…LHGLFESPAA (188 aa)) enclose the GATase cobBQ-type domain. C329 (nucleophile) is an active-site residue. H427 is a catalytic residue.

This sequence belongs to the CobB/CobQ family. CobQ subfamily.

It participates in cofactor biosynthesis; adenosylcobalamin biosynthesis. Its function is as follows. Catalyzes amidations at positions B, D, E, and G on adenosylcobyrinic A,C-diamide. NH(2) groups are provided by glutamine, and one molecule of ATP is hydrogenolyzed for each amidation. This is Cobyric acid synthase from Pseudomonas syringae pv. syringae (strain B728a).